The following is a 190-amino-acid chain: uncharacterized protein (190 aa).

One can recognise a Macro domain in the interval 1-185; it reads MITMFKIVRG…LALETIGLGD (185 aa).

This is an uncharacterized protein from Pyrococcus horikoshii (strain ATCC 700860 / DSM 12428 / JCM 9974 / NBRC 100139 / OT-3).